A 212-amino-acid polypeptide reads, in one-letter code: Prolactin-3C1 (212 aa).

The first 29 residues, 1–29 (MQLSLTQARTWKGLFLLVSCMFLWVYVTA), serve as a signal peptide directing secretion. Cys-80 and Cys-188 are oxidised to a cystine. A glycan (N-linked (GlcNAc...) asparagine) is linked at Asn-100.

Belongs to the somatotropin/prolactin family. Expressed exclusively in decidua.

Its subcellular location is the secreted. This chain is Prolactin-3C1 (Prl3c1), found in Mus musculus (Mouse).